The sequence spans 751 residues: FAD-dependent monooxygenase atnA (751 aa).

A helical transmembrane segment spans residues 8-28 (LIVGGGVAGLSLAIMLEAYGF). Positions 34, 48, and 109 each coordinate FAD. The active site involves Tyr218. Residues Asp311 and Ala324 each contribute to the FAD site. A run of 8 helical transmembrane segments spans residues 446–466 (PLAT…PWSV), 481–501 (SEVF…LWVI), 508–528 (LLIS…YWGW), 563–583 (ALLP…ALAS), 590–610 (DWWP…STFL), 639–659 (IAVV…AALL), 663–683 (IISL…ALIV), and 706–726 (AWAV…LAGA).

The protein belongs to the paxM FAD-dependent monooxygenase family. The cofactor is FAD.

The protein resides in the membrane. It participates in secondary metabolite biosynthesis; terpenoid biosynthesis. FAD-dependent monooxygenase; part of the gene cluster that mediates the biosynthesis of the meroterpenoids arthripenoids. The pathway begins with the HR-PKS atnH that catalyzes two chain-extension steps to form a reduced triketide, which then primes the SAT domain in the NR-PKS atnG to initiate three more cycles of extension to give a linear hexaketide corresponding to the polyketide part of arthripenoids. The FAD-dependent monooxygenase atnJ then performs an oxidative decarboxylation at C11 of the atnH/atnG product, via an electrophilic aromatic hydroxylation with concomitant ipso-decarboxylation. The membrane-bound polyprenyl transferase atnF then introduces a farnesyl group before the FAD-dependent monooxygenase atnK functions as the first epoxidase on terminal C12'-C13' olefin, followed by a second epoxidation on C7'-C8' catalyzed by atnA. The terpene cyclase/mutase atnI then initiates the sequential tricyclic ring formation through protonation of the terminal epoxide and catalyzes the regioselective and stereoselective 6/6/6-tricyclic ring formation. The cytochrome P450 monooxygenase atnM is responsible for hydroxylating both C1' and C10'. The next steps may involve ketoreduction and acetyl transfer by the ketoreductase atnB and the acetyltransferase atnC, and lead to the production of arthripenoid B, the final biosynthetic product of the atn cluster. The hydroquinone moiety in arthripenoid B is prone to undergo spontaneous oxidation to afford a benzoquinone compound, a key intermediate for generating structure diversity. For instance, addition of a cysteine followed by ring contraction gives arthripenoid A, tautomerization gives the main product arthripenoid C, addition of a molecular of water or amine affords arthripenoid D or E, respectively, and loss of one water forms arthripenoid F. This chain is FAD-dependent monooxygenase atnA, found in Arthrinium sp.